Consider the following 188-residue polypeptide: MPSPVATVETDSLQQPILGSRRPSNYFWAIAVSVGGTGFLLAGLSSYLQVNLLPFSEPTRLAFLPQGLVMGLYGIAAILLASYLWFVISLDVGGGYNAFDRKTQKATIFRWGFPGKNRRVEITYPLSDIQAVRVDIKEGLNPKRALYLKVKGRGDVPLTRVGQPLPLTELESQGAELARFLAVPLEGL.

2 consecutive transmembrane segments (helical) span residues 26–46 (YFWAIAVSVGGTGFLLAGLSS) and 68–88 (LVMGLYGIAAILLASYLWFVI).

It belongs to the Ycf4 family.

Its subcellular location is the cellular thylakoid membrane. Functionally, seems to be required for the assembly of the photosystem I complex. The protein is Photosystem I assembly protein Ycf4 of Synechococcus sp. (strain ATCC 27144 / PCC 6301 / SAUG 1402/1) (Anacystis nidulans).